A 183-amino-acid chain; its full sequence is Apo-citrate lyase phosphoribosyl-dephospho-CoA transferase (183 aa).

It belongs to the CitX family.

The enzyme catalyses apo-[citrate lyase ACP] + 2'-(5''-triphospho-alpha-D-ribosyl)-3'-dephospho-CoA = holo-[citrate lyase ACP] + diphosphate. Functionally, transfers 2-(5''-triphosphoribosyl)-3'-dephosphocoenzyme-A on a serine residue to the apo-acyl carrier protein (gamma chain) of the citrate lyase to yield holo-acyl carrier protein. The protein is Apo-citrate lyase phosphoribosyl-dephospho-CoA transferase of Shigella flexneri serotype 5b (strain 8401).